The sequence spans 323 residues: Methenyltetrahydromethanopterin cyclohydrolase (323 aa).

This sequence belongs to the MCH family.

It localises to the cytoplasm. The catalysed reaction is 5,10-methenyl-5,6,7,8-tetrahydromethanopterin + H2O = N(5)-formyl-5,6,7,8-tetrahydromethanopterin + H(+). Its pathway is one-carbon metabolism; methanogenesis from CO(2); 5,10-methenyl-5,6,7,8-tetrahydromethanopterin from CO(2): step 3/3. Its function is as follows. Catalyzes the reversible interconversion of 5-formyl-H(4)MPT to methenyl-H(4)MPT(+). The polypeptide is Methenyltetrahydromethanopterin cyclohydrolase (Methanococcus maripaludis (strain DSM 14266 / JCM 13030 / NBRC 101832 / S2 / LL)).